Consider the following 324-residue polypeptide: Anthranilate phosphoribosyltransferase (324 aa).

Residues glycine 75, 78–79 (GD), threonine 83, 85–88 (NVST), 102–110 (KHGNFGITG), and serine 114 each bind 5-phospho-alpha-D-ribose 1-diphosphate. Glycine 75 contributes to the anthranilate binding site. Serine 87 contributes to the Mg(2+) binding site. Anthranilate is bound at residue asparagine 105. Arginine 160 contributes to the anthranilate binding site. 2 residues coordinate Mg(2+): aspartate 216 and glutamate 217.

Belongs to the anthranilate phosphoribosyltransferase family. In terms of assembly, homodimer. Mg(2+) serves as cofactor.

It catalyses the reaction N-(5-phospho-beta-D-ribosyl)anthranilate + diphosphate = 5-phospho-alpha-D-ribose 1-diphosphate + anthranilate. It functions in the pathway amino-acid biosynthesis; L-tryptophan biosynthesis; L-tryptophan from chorismate: step 2/5. Catalyzes the transfer of the phosphoribosyl group of 5-phosphorylribose-1-pyrophosphate (PRPP) to anthranilate to yield N-(5'-phosphoribosyl)-anthranilate (PRA). The sequence is that of Anthranilate phosphoribosyltransferase from Picrophilus torridus (strain ATCC 700027 / DSM 9790 / JCM 10055 / NBRC 100828 / KAW 2/3).